The chain runs to 206 residues: Ras-related protein Rab-7a (206 aa).

Position 15–22 (Gly-15–Thr-22) interacts with GTP. Phosphoserine occurs at positions 17 and 23. Phosphothreonine is present on residues Thr-34, Thr-40, and Thr-64. Residues Thr-34–Thr-40 and Asp-63–Gln-67 each bind GTP. An Effector region motif is present at residues Tyr-37–Phe-45. Ser-72 carries the phosphoserine modification. Phosphotyrosine is present on residues Tyr-78 and Tyr-88. GTP contacts are provided by residues Asn-125–Asp-128 and Ala-157–Lys-158. 2 S-geranylgeranyl cysteine lipidation sites follow: Cys-205 and Cys-206.

Belongs to the small GTPase superfamily. Rab family.

The protein resides in the cytoplasmic vesicle. It localises to the phagosome membrane. Its subcellular location is the late endosome membrane. It is found in the lysosome membrane. The protein localises to the autophagosome membrane. The protein resides in the lipid droplet. The enzyme catalyses GTP + H2O = GDP + phosphate + H(+). In terms of biological role, small GTPase which cycles between active GTP-bound and inactive GDP-bound states. In its active state, binds to a variety of effector proteins playing a key role in the regulation of endo-lysosomal trafficking. Governs early-to-late endosomal maturation, microtubule minus-end as well as plus-end directed endosomal migration and positioning, and endosome-lysosome transport through different protein-protein interaction cascades. Involved in lipophagy, a cytosolic lipase-independent autophagic pathway. Plays a role in phagocyte formation and acidification. This is Ras-related protein Rab-7a from Paramecium octaurelia.